The following is a 277-amino-acid chain: Large ribosomal subunit protein uL2 (277 aa).

The disordered stretch occupies residues 223 to 261 (SVMNPNDHPHGGGEGKSPVGRPSPVTPWGKPALGYKTRK).

It belongs to the universal ribosomal protein uL2 family. In terms of assembly, part of the 50S ribosomal subunit. Forms a bridge to the 30S subunit in the 70S ribosome.

One of the primary rRNA binding proteins. Required for association of the 30S and 50S subunits to form the 70S ribosome, for tRNA binding and peptide bond formation. It has been suggested to have peptidyltransferase activity; this is somewhat controversial. Makes several contacts with the 16S rRNA in the 70S ribosome. This is Large ribosomal subunit protein uL2 from Clostridium botulinum (strain Alaska E43 / Type E3).